The primary structure comprises 616 residues: Protein cereblon (616 aa).

Disordered stretches follow at residues 1–39, 63–137, and 182–220; these read MDEEETAEINAQEQEVAGSAGEAAAGPSGAEVQPNDDSV, FGPS…AMPR, and SQERRRSRNSDEVSPEAEDDELPEHPPPPPPRPPIDIDM. Residues 11–32 show a composition bias toward low complexity; it reads AQEQEVAGSAGEAAAGPSGAEV. Residues 96–107 show a composition bias toward acidic residues; the sequence is SEEDIVLDDGTE. The segment covering 183-192 has biased composition (basic and acidic residues); sequence QERRRSRNSD. Acidic residues predominate over residues 194–203; it reads VSPEAEDDEL. A compositionally biased stretch (pro residues) spans 206–215; the sequence is HPPPPPPRPP. One can recognise a Lon N-terminal domain in the interval 257–482; that stretch reads HMLIFLHQYI…LIGGILKEET (226 aa). The CULT domain maps to 481 to 590; the sequence is ETLFYCRYCN…LAGSSVRIGK (110 aa). Positions 486, 489, 555, and 558 each coordinate Zn(2+).

The protein belongs to the CRBN family. As to quaternary structure, likely a component of a DCX (DDB1-CUL4-X-box) protein ligase complex. May interact with pic/DDB1. Ubiquitinated.

The protein resides in the nucleus. It functions in the pathway protein modification; protein ubiquitination. Substrate recognition component of a DCX (DDB1-CUL4-X-box) E3 protein ligase complex that mediates the ubiquitination and subsequent proteasomal degradation of target proteins. Has an essential role in mediating growth by negatively regulating insulin signaling. It also has a role in maintaining presynaptic function in the neuromuscular junction synapses of third-instar larvae. The chain is Protein cereblon from Drosophila persimilis (Fruit fly).